A 149-amino-acid polypeptide reads, in one-letter code: UPF0178 protein VC0395_A0405/VC395_0897 (149 aa).

It belongs to the UPF0178 family.

The sequence is that of UPF0178 protein VC0395_A0405/VC395_0897 from Vibrio cholerae serotype O1 (strain ATCC 39541 / Classical Ogawa 395 / O395).